Consider the following 132-residue polypeptide: Transcription antitermination protein NusB (132 aa).

This sequence belongs to the NusB family.

Its function is as follows. Involved in transcription antitermination. Required for transcription of ribosomal RNA (rRNA) genes. Binds specifically to the boxA antiterminator sequence of the ribosomal RNA (rrn) operons. This Campylobacter jejuni subsp. doylei (strain ATCC BAA-1458 / RM4099 / 269.97) protein is Transcription antitermination protein NusB.